A 443-amino-acid polypeptide reads, in one-letter code: Probable glutamate dehydrogenase (443 aa).

Lys-86 is a catalytic residue.

The protein belongs to the Glu/Leu/Phe/Val dehydrogenases family.

It carries out the reaction L-glutamate + NAD(+) + H2O = 2-oxoglutarate + NH4(+) + NADH + H(+). The enzyme catalyses L-glutamate + NADP(+) + H2O = 2-oxoglutarate + NH4(+) + NADPH + H(+). The polypeptide is Probable glutamate dehydrogenase (Sinorhizobium fredii (strain NBRC 101917 / NGR234)).